The primary structure comprises 716 residues: Leucine-rich repeat neuronal protein 1 (716 aa).

A signal peptide spans 1–25 (MARLSTGKAACQVVLGLLITSLTES). Positions 26 to 72 (SILTSECPQLCVCEIRPWFTPQSTYREATTVDCNDLRLTRIPGNLSS) constitute an LRRNT domain. Over 26–631 (SILTSECPQL…DISDHETSTA (606 aa)) the chain is Extracellular. N-linked (GlcNAc...) asparagine glycosylation occurs at Asn69. LRR repeat units follow at residues 73-95 (DTQVLLLQSNNIAKTVDELQQLF), 96-117 (NLTELDFSQNNFTNIKEVGLAN), 120-141 (QLTTLHLEENQISEMTDYCLQD), 144-165 (NLQELYINHNQISTISANAFSG), 168-189 (NLLRLHLNSNKLKVIDSRWFDS), 192-213 (NLEILMIGENPVIGILDMNFRP), 216-237 (NLRSLVLAGMYLTDVPGNALVG), 240-261 (SLESLSFYDNKLIKVPQLALQK), and 264-285 (NLKFLDLNKNPIHKIQEGDFKN). N-linked (GlcNAc...) asparagine glycans are attached at residues Asn96 and Asn117. Residues 371–424 (NPLRCDCVIHWINSNKTNIRFMEPLSMFCAMPPEYRGQQVKEVLIQDSSEQCLP) enclose the LRRCT domain. Asn385 carries an N-linked (GlcNAc...) asparagine glycan. The Ig-like C2-type domain maps to 424 to 515 (PMISHDTFPN…GADTRVATIK (92 aa)). A disulfide bridge connects residues Cys447 and Cys499. A glycan (N-linked (GlcNAc...) asparagine) is linked at Asn517. Residues 525–619 (QVLKIYVKQT…VNVTTKTAAF (95 aa)) enclose the Fibronectin type-III domain. The helical transmembrane segment at 632 to 652 (LAAVMGSMFAVISLASIAIYI) threads the bilayer. Topologically, residues 653 to 716 (AKRFKRKNYH…VDTSRSYYMW (64 aa)) are cytoplasmic. The segment at 692–716 (SDKDKDGSADTKPTQVDTSRSYYMW) is disordered. Over residues 702-716 (TKPTQVDTSRSYYMW) the composition is skewed to polar residues.

Expressed in brain.

The protein resides in the membrane. The protein is Leucine-rich repeat neuronal protein 1 (Lrrn1) of Mus musculus (Mouse).